Consider the following 180-residue polypeptide: Translation initiation factor IF-3 (180 aa).

The protein belongs to the IF-3 family. In terms of assembly, monomer.

It is found in the cytoplasm. In terms of biological role, IF-3 binds to the 30S ribosomal subunit and shifts the equilibrium between 70S ribosomes and their 50S and 30S subunits in favor of the free subunits, thus enhancing the availability of 30S subunits on which protein synthesis initiation begins. The protein is Translation initiation factor IF-3 of Shewanella oneidensis (strain ATCC 700550 / JCM 31522 / CIP 106686 / LMG 19005 / NCIMB 14063 / MR-1).